We begin with the raw amino-acid sequence, 282 residues long: MSSYENHQALDGLTLGKSTDYRDNYDVSLLQGVPRSLNRDPLGLTADNLPFHGADIWTLYELSWLNSQGLPQVAVGHVELDYTSVNLIESKSFKLYLNSFNQTRFDTWETVRQTLERDLRACAQGNVSVRLHRLDELEGQPVAHFHGACIDDQDISIDNYQFTTDYLQHAVSGEKQVEETLVSHLLKSNCLITHQPDWGSIQIQYRGRKIDREKLLRYLVSFRHHNEFHEQCVERIFNDILRFCQPETLSIYARYTRRGGLDINPWRSNTDFVPATGRLARQ.

88 to 90 (IES) serves as a coordination point for substrate. Position 90–91 (90–91 (SK)) interacts with NADPH. The active-site Thioimide intermediate is the Cys190. Asp197 functions as the Proton donor in the catalytic mechanism. 229–230 (HE) provides a ligand contact to substrate. Residue 258 to 259 (RG) coordinates NADPH.

The protein belongs to the GTP cyclohydrolase I family. QueF type 2 subfamily. Homodimer.

It localises to the cytoplasm. It carries out the reaction 7-aminomethyl-7-carbaguanine + 2 NADP(+) = 7-cyano-7-deazaguanine + 2 NADPH + 3 H(+). It functions in the pathway tRNA modification; tRNA-queuosine biosynthesis. Its function is as follows. Catalyzes the NADPH-dependent reduction of 7-cyano-7-deazaguanine (preQ0) to 7-aminomethyl-7-deazaguanine (preQ1). This Salmonella paratyphi A (strain ATCC 9150 / SARB42) protein is NADPH-dependent 7-cyano-7-deazaguanine reductase.